Here is a 283-residue protein sequence, read N- to C-terminus: Probable replication-associated protein repA1 (283 aa).

Belongs to the IncFII RepA family.

Functionally, this protein is essential for plasmid replication; it is involved in copy control functions. This chain is Probable replication-associated protein repA1 (repA1), found in Buchnera aphidicola subsp. Acyrthosiphon pisum (strain APS) (Acyrthosiphon pisum symbiotic bacterium).